The following is a 182-amino-acid chain: Ribosome maturation factor RimM (182 aa).

The PRC barrel domain occupies 102 to 182; the sequence is EEGDYYWKDL…SIEVDWDPGF (81 aa).

This sequence belongs to the RimM family. As to quaternary structure, binds ribosomal protein uS19.

Its subcellular location is the cytoplasm. Its function is as follows. An accessory protein needed during the final step in the assembly of 30S ribosomal subunit, possibly for assembly of the head region. Essential for efficient processing of 16S rRNA. May be needed both before and after RbfA during the maturation of 16S rRNA. It has affinity for free ribosomal 30S subunits but not for 70S ribosomes. This chain is Ribosome maturation factor RimM, found in Escherichia fergusonii (strain ATCC 35469 / DSM 13698 / CCUG 18766 / IAM 14443 / JCM 21226 / LMG 7866 / NBRC 102419 / NCTC 12128 / CDC 0568-73).